A 590-amino-acid chain; its full sequence is DNA mismatch repair protein MutL (590 aa).

This sequence belongs to the DNA mismatch repair MutL/HexB family.

Its function is as follows. This protein is involved in the repair of mismatches in DNA. It is required for dam-dependent methyl-directed DNA mismatch repair. May act as a 'molecular matchmaker', a protein that promotes the formation of a stable complex between two or more DNA-binding proteins in an ATP-dependent manner without itself being part of a final effector complex. The polypeptide is DNA mismatch repair protein MutL (Caldanaerobacter subterraneus subsp. tengcongensis (strain DSM 15242 / JCM 11007 / NBRC 100824 / MB4) (Thermoanaerobacter tengcongensis)).